A 297-amino-acid polypeptide reads, in one-letter code: Protein phosphatase PTC7 homolog (297 aa).

The N-terminal 27 residues, 1-27 (MFSVLSCGRLVARAVFGGLSQTDSRDY), are a transit peptide targeting the mitochondrion. The PPM-type phosphatase domain occupies 28 to 292 (SLVTASCGFG…DDITVLLSIV (265 aa)). The Mn(2+) site is built by aspartate 71, glycine 72, and aspartate 216.

It belongs to the PP2C family. The cofactor is Mg(2+). Mn(2+) is required as a cofactor.

Its subcellular location is the mitochondrion matrix. The enzyme catalyses O-phospho-L-seryl-[protein] + H2O = L-seryl-[protein] + phosphate. The catalysed reaction is O-phospho-L-threonyl-[protein] + H2O = L-threonyl-[protein] + phosphate. Protein phosphatase which positively regulates biosynthesis of the ubiquinone, coenzyme Q. Dephosphorylates the ubiquinone biosynthesis protein coq7 which is likely to lead to its activation. This chain is Protein phosphatase PTC7 homolog (pptc7), found in Xenopus laevis (African clawed frog).